We begin with the raw amino-acid sequence, 419 residues long: Glucose-1-phosphate adenylyltransferase (419 aa).

Residues Y106, G171, 186-187 (EK), and S204 each bind alpha-D-glucose 1-phosphate.

The protein belongs to the bacterial/plant glucose-1-phosphate adenylyltransferase family. Homotetramer.

The enzyme catalyses alpha-D-glucose 1-phosphate + ATP + H(+) = ADP-alpha-D-glucose + diphosphate. Its pathway is glycan biosynthesis; glycogen biosynthesis. Functionally, involved in the biosynthesis of ADP-glucose, a building block required for the elongation reactions to produce glycogen. Catalyzes the reaction between ATP and alpha-D-glucose 1-phosphate (G1P) to produce pyrophosphate and ADP-Glc. This chain is Glucose-1-phosphate adenylyltransferase, found in Roseobacter denitrificans (strain ATCC 33942 / OCh 114) (Erythrobacter sp. (strain OCh 114)).